Here is a 514-residue protein sequence, read N- to C-terminus: Type-2 serine--tRNA ligase (514 aa).

Alanine 313 provides a ligand contact to L-serine. A Zn(2+)-binding site is contributed by cysteine 315. Position 344 (arginine 344) interacts with L-serine. ATP is bound by residues 344–346 (RWE) and 355–356 (RV). An L-serine-binding site is contributed by 361 to 363 (RGE). Positions 363 and 470 each coordinate Zn(2+). Arginine 477 is an ATP binding site.

The protein belongs to the class-II aminoacyl-tRNA synthetase family. Type-2 seryl-tRNA synthetase subfamily. In terms of assembly, homodimer. It depends on Zn(2+) as a cofactor.

The protein localises to the cytoplasm. It carries out the reaction tRNA(Ser) + L-serine + ATP = L-seryl-tRNA(Ser) + AMP + diphosphate + H(+). It catalyses the reaction tRNA(Sec) + L-serine + ATP = L-seryl-tRNA(Sec) + AMP + diphosphate + H(+). Its pathway is aminoacyl-tRNA biosynthesis; selenocysteinyl-tRNA(Sec) biosynthesis; L-seryl-tRNA(Sec) from L-serine and tRNA(Sec): step 1/1. Its function is as follows. Catalyzes the attachment of serine to tRNA(Ser). Is also able to aminoacylate tRNA(Sec) with serine, to form the misacylated tRNA L-seryl-tRNA(Sec), which will be further converted into selenocysteinyl-tRNA(Sec). The protein is Type-2 serine--tRNA ligase of Methanococcus maripaludis (strain C5 / ATCC BAA-1333).